A 186-amino-acid polypeptide reads, in one-letter code: Dehydrin Rab18 (186 aa).

Residues 1–186 (MASYQNRPGG…IKEKLPGGGR (186 aa)) form a disordered region. A compositionally biased stretch (gly residues) spans 30 to 85 (PMGGGGYGTGGGGGATGGQGYGTGGQGYGSGGQGYGTGGQGYGTGTGTEGFGTGGG). A compositionally biased stretch (basic and acidic residues) spans 89–98 (HGQEQLHKES). The segment covering 105 to 116 (MLHRSGSGSSSS) has biased composition (low complexity). The segment covering 133-144 (KIKEKLPGHHDQ) has biased composition (basic and acidic residues). Residues 152-164 (GGMGSGYDAGGYG) are compositionally biased toward gly residues. Basic and acidic residues predominate over residues 165 to 186 (GEHHEKKGMMDKIKEKLPGGGR).

Belongs to the plant dehydrin family.

In Arabidopsis thaliana (Mouse-ear cress), this protein is Dehydrin Rab18 (RAB18).